Reading from the N-terminus, the 205-residue chain is NAD(P)H dehydrogenase (quinone) (205 aa).

The Flavodoxin-like domain occupies 3 to 194 (VLVVYYSMYG…AAARYQGKHV (192 aa)). FMN-binding positions include 9-14 (SMYGHI) and 82-84 (TRF). Position 11 (Tyr-11) interacts with NAD(+). Trp-102 lines the substrate pocket. His-138 lines the FMN pocket.

It belongs to the WrbA family. Requires FMN as cofactor.

It carries out the reaction a quinone + NADH + H(+) = a quinol + NAD(+). It catalyses the reaction a quinone + NADPH + H(+) = a quinol + NADP(+). This is NAD(P)H dehydrogenase (quinone) from Geotalea daltonii (strain DSM 22248 / JCM 15807 / FRC-32) (Geobacter daltonii).